We begin with the raw amino-acid sequence, 279 residues long: Large ribosomal subunit protein uL2 (279 aa).

2 disordered regions span residues 1–59 (MGIR…GGHK) and 224–279 (VAMN…KNKR). A compositionally biased stretch (basic residues) spans 50–59 (TTRHKGGGHK). The segment covering 253-268 (REGRTRRPNKESDKLI) has biased composition (basic and acidic residues). Residues 269–279 (VRRRRTGKNKR) show a composition bias toward basic residues.

The protein belongs to the universal ribosomal protein uL2 family. Part of the 50S ribosomal subunit. Forms a bridge to the 30S subunit in the 70S ribosome.

Functionally, one of the primary rRNA binding proteins. Required for association of the 30S and 50S subunits to form the 70S ribosome, for tRNA binding and peptide bond formation. It has been suggested to have peptidyltransferase activity; this is somewhat controversial. Makes several contacts with the 16S rRNA in the 70S ribosome. The chain is Large ribosomal subunit protein uL2 from Pseudarthrobacter chlorophenolicus (strain ATCC 700700 / DSM 12829 / CIP 107037 / JCM 12360 / KCTC 9906 / NCIMB 13794 / A6) (Arthrobacter chlorophenolicus).